Reading from the N-terminus, the 746-residue chain is Teichoic acid poly(glycerol phosphate) polymerase (746 aa).

CDP-glycerol contacts are provided by residues 473–477 (WHGTP), Arg-540, 573–574 (PT), 610–612 (RMH), 652–653 (SS), and Asp-657.

The protein belongs to the CDP-glycerol glycerophosphotransferase family.

The protein localises to the cell membrane. The enzyme catalyses 4-O-[(2R)-glycerylphospho]-N-acetyl-beta-D-mannosaminyl-(1-&gt;4)-N-acetyl-alpha-D-glucosaminyl di-trans,octa-cis-undecaprenyl diphosphate + n CDP-glycerol = 4-O-{[(2R)-1-glycerylphospho](n)-(2R)-1-glycerylphospho}-N-acetyl-beta-D-mannosaminyl-(1-&gt;4)-N-acetyl-alpha-D-glucosaminyl undecaprenyl diphosphate + n CMP + n H(+). The protein operates within cell wall biogenesis; poly(glycerol phosphate) teichoic acid biosynthesis. Its function is as follows. Responsible for the polymerization of the main chain of the major teichoic acid by sequential transfer of glycerol phosphate units from CDP-glycerol to the disaccharide linkage unit. Synthesizes polymers of approximately 35 glycerol phosphate units in length. The polypeptide is Teichoic acid poly(glycerol phosphate) polymerase (tagF) (Bacillus subtilis (strain 168)).